A 582-amino-acid chain; its full sequence is Formate--tetrahydrofolate ligase (582 aa).

65–72 contributes to the ATP binding site; sequence TPLGEGKT.

Belongs to the formate--tetrahydrofolate ligase family.

It catalyses the reaction (6S)-5,6,7,8-tetrahydrofolate + formate + ATP = (6R)-10-formyltetrahydrofolate + ADP + phosphate. It functions in the pathway one-carbon metabolism; tetrahydrofolate interconversion. This Vibrio vulnificus (strain CMCP6) protein is Formate--tetrahydrofolate ligase.